A 299-amino-acid polypeptide reads, in one-letter code: 33 kDa chaperonin (299 aa).

2 disulfides stabilise this stretch: Cys-234–Cys-236 and Cys-268–Cys-271.

Belongs to the HSP33 family. Post-translationally, under oxidizing conditions two disulfide bonds are formed involving the reactive cysteines. Under reducing conditions zinc is bound to the reactive cysteines and the protein is inactive.

It is found in the cytoplasm. Functionally, redox regulated molecular chaperone. Protects both thermally unfolding and oxidatively damaged proteins from irreversible aggregation. Plays an important role in the bacterial defense system toward oxidative stress. This chain is 33 kDa chaperonin, found in Pseudomonas putida (strain GB-1).